Reading from the N-terminus, the 161-residue chain is Phosphopantetheine adenylyltransferase (161 aa).

Position 11 (Ser11) interacts with substrate. ATP contacts are provided by residues 11–12 (SF) and His19. Substrate-binding residues include Lys43, Leu75, and Arg89. ATP-binding positions include 90–92 (GLR), Glu100, and 125–131 (YSYLSSS).

The protein belongs to the bacterial CoaD family. Homohexamer. The cofactor is Mg(2+).

The protein localises to the cytoplasm. The enzyme catalyses (R)-4'-phosphopantetheine + ATP + H(+) = 3'-dephospho-CoA + diphosphate. Its pathway is cofactor biosynthesis; coenzyme A biosynthesis; CoA from (R)-pantothenate: step 4/5. Reversibly transfers an adenylyl group from ATP to 4'-phosphopantetheine, yielding dephospho-CoA (dPCoA) and pyrophosphate. This is Phosphopantetheine adenylyltransferase from Geotalea daltonii (strain DSM 22248 / JCM 15807 / FRC-32) (Geobacter daltonii).